Consider the following 196-residue polypeptide: tRNA(Phe) 7-((3-amino-3-carboxypropyl)-4-demethylwyosine(37)-N(4))-methyltransferase 1 (196 aa).

The protein belongs to the TYW3 family.

The catalysed reaction is 4-demethyl-7-[(3S)-3-amino-3-carboxypropyl]wyosine(37) in tRNA(Phe) + S-adenosyl-L-methionine = 7-[(3S)-3-amino-3-carboxypropyl]wyosine(37) in tRNA(Phe) + S-adenosyl-L-homocysteine + H(+). Its function is as follows. S-adenosyl-L-methionine-dependent methyltransferase that acts as a component of the wyosine derivatives biosynthesis pathway. Probably methylates N-4 position of wybutosine-86 to produce wybutosine-72. In Pyrococcus furiosus (strain ATCC 43587 / DSM 3638 / JCM 8422 / Vc1), this protein is tRNA(Phe) 7-((3-amino-3-carboxypropyl)-4-demethylwyosine(37)-N(4))-methyltransferase 1.